The primary structure comprises 276 residues: Glutamate 5-kinase (276 aa).

Lys14 provides a ligand contact to ATP. 3 residues coordinate substrate: Ser54, Asp141, and Asn157. Residues 177 to 178 (SD) and 219 to 225 (TGGMLTK) each bind ATP.

The protein belongs to the glutamate 5-kinase family.

It is found in the cytoplasm. The enzyme catalyses L-glutamate + ATP = L-glutamyl 5-phosphate + ADP. Its pathway is amino-acid biosynthesis; L-proline biosynthesis; L-glutamate 5-semialdehyde from L-glutamate: step 1/2. In terms of biological role, catalyzes the transfer of a phosphate group to glutamate to form L-glutamate 5-phosphate. This is Glutamate 5-kinase from Listeria welshimeri serovar 6b (strain ATCC 35897 / DSM 20650 / CCUG 15529 / CIP 8149 / NCTC 11857 / SLCC 5334 / V8).